Reading from the N-terminus, the 1692-residue chain is Cullin-7 (1692 aa).

Residues 348–421 (RTAFASVNTY…HWHMLEILGF (74 aa)) form the CPH domain. The DOC domain maps to 791–970 (PIQIPFFDVF…HTRLFYMVRA (180 aa)). Positions 1319-1335 (VAHEDSGKEHKSKKEDA) are enriched in basic and acidic residues. Positions 1319–1374 (VAHEDSGKEHKSKKEDAAGETAAVAMADEEEEEGKKEEGEEEEGEGEEELEEEEER) are disordered. A compositionally biased stretch (acidic residues) spans 1357–1374 (GEEEEGEGEEELEEEEER). A Glycyl lysine isopeptide (Lys-Gly) (interchain with G-Cter in NEDD8) cross-link involves residue K1570.

The protein belongs to the cullin family. Component of the 3M complex, composed of core components CUL7, CCDC8 and OBSL1. Component of the Cul7-RING(FBXW8) complex consisting of CUL7, RBX1, SKP1 and FBXW8. Within the Cul7-RING(FBXW8) complex interacts with FBXW8 and RBX1, but not with SKP1. Interacts with CUL1 (via the C-terminal domain); the interaction seems to be mediated by FBXW8; it is likely specific to FBXW8, but not other F-box proteins. Interacts (via the CPH domain) with p53/TP53; the interaction preferentially involves tetrameric and dimeric p53/TP53; this interaction recruits p53/TP53 for ubiquitination by neddylated CUL1-RBX1. The CUL7-CUL9 heterodimer seems to interact specifically with p53/TP53. Interacts with FBXW8; interaction is mutually exclusive of binding to CUL9 or p53/TP53. Interacts with CUL9; leading to inhibited CUL9 activity. Interacts with OBSL1. Interacts (as part of the 3M complex) with HDAC4 and HDAC5; it is negatively regulated by ANKRA2.

It localises to the cytoplasm. The protein resides in the cytoskeleton. The protein localises to the microtubule organizing center. It is found in the centrosome. Its subcellular location is the perinuclear region. It localises to the golgi apparatus. It participates in protein modification; protein ubiquitination. Its function is as follows. Core component of the 3M and Cul7-RING(FBXW8) complexes, which mediate the ubiquitination and subsequent proteasomal degradation of target proteins. Core component of the 3M complex, a complex required to regulate microtubule dynamics and genome integrity. It is unclear how the 3M complex regulates microtubules, it could act by controlling the level of a microtubule stabilizer. The Cul7-RING(FBXW8) complex alone lacks ubiquitination activity and does not promote polyubiquitination and proteasomal degradation of p53/TP53. However it mediates recruitment of p53/TP53 for ubiquitination by neddylated CUL1-RBX1. Interaction with CUL9 is required to inhibit CUL9 activity and ubiquitination of BIRC5. The Cul7-RING(FBXW8) complex also mediates ubiquitination and consequent degradation of target proteins such as GORASP1, IRS1 and MAP4K1/HPK1. Ubiquitination of GORASP1 regulates Golgi morphogenesis and dendrite patterning in brain. Mediates ubiquitination and degradation of IRS1 in a mTOR-dependent manner: the Cul7-RING(FBXW8) complex recognizes and binds IRS1 previously phosphorylated by S6 kinase (RPS6KB1 or RPS6KB2). The Cul7-RING(FBXW8) complex also mediates ubiquitination of MAP4K1/HPK1: recognizes and binds autophosphorylated MAP4K1/HPK1, leading to its degradation, thereby affecting cell proliferation and differentiation. Acts as a regulator in trophoblast cell epithelial-mesenchymal transition and placental development. While the Cul7-RING(FBXW8) and the 3M complexes are associated and involved in common processes, CUL7 and the Cul7-RING(FBXW8) complex may have additional functions. Probably plays a role in the degradation of proteins involved in endothelial proliferation and/or differentiation. The protein is Cullin-7 (Cul7) of Rattus norvegicus (Rat).